A 115-amino-acid polypeptide reads, in one-letter code: Nucleoid-associated protein Ccel_0243 (115 aa).

The protein belongs to the YbaB/EbfC family. In terms of assembly, homodimer.

It is found in the cytoplasm. The protein resides in the nucleoid. In terms of biological role, binds to DNA and alters its conformation. May be involved in regulation of gene expression, nucleoid organization and DNA protection. The sequence is that of Nucleoid-associated protein Ccel_0243 from Ruminiclostridium cellulolyticum (strain ATCC 35319 / DSM 5812 / JCM 6584 / H10) (Clostridium cellulolyticum).